The sequence spans 86 residues: Protein Tat (86 aa).

The interaction with human CREBBP stretch occupies residues 1–24 (MEPVDPRLEPWKHPGSQPKTACTN). The transactivation stretch occupies residues 1–48 (MEPVDPRLEPWKHPGSQPKTACTNCYCKKCCFHCQVCFITKALGISYG). Residues Cys-22, Cys-25, and Cys-27 each contribute to the Zn(2+) site. The tract at residues 22-37 (CTNCYCKKCCFHCQVC) is cysteine-rich. Lys-28 carries the N6-acetyllysine; by host PCAF modification. Cys-30, His-33, Cys-34, and Cys-37 together coordinate Zn(2+). Positions 38-48 (FITKALGISYG) are core. A compositionally biased stretch (basic residues) spans 48–58 (GRKKRRQRRRA). The tract at residues 48–86 (GRKKRRQRRRAPQGSQTHQVSLSKQPTSQSRGDPTGPKE) is disordered. Residues 49–57 (RKKRRQRRR) carry the Nuclear localization signal, RNA-binding (TAR), and protein transduction motif. Positions 49–86 (RKKRRQRRRAPQGSQTHQVSLSKQPTSQSRGDPTGPKE) are interaction with the host capping enzyme RNGTT. Lys-50 and Lys-51 each carry N6-acetyllysine; by host EP300 and GCN5L2. Asymmetric dimethylarginine; by host PRMT6 occurs at positions 52 and 53. Residues 60 to 79 (QGSQTHQVSLSKQPTSQSRG) show a composition bias toward polar residues. Lys-71 participates in a covalent cross-link: Glycyl lysine isopeptide (Lys-Gly) (interchain with G-Cter in ubiquitin). Positions 78–80 (RGD) match the Cell attachment site motif.

The protein belongs to the lentiviruses Tat family. As to quaternary structure, interacts with host CCNT1. Associates with the P-TEFb complex composed at least of Tat, P-TEFb (CDK9 and CCNT1), TAR RNA, RNA Pol II. Recruits the HATs CREBBP, TAF1/TFIID, EP300, PCAF and GCN5L2. Interacts with host KAT5/Tip60; this interaction targets the latter to degradation. Interacts with the host deacetylase SIRT1. Interacts with host capping enzyme RNGTT; this interaction stimulates RNGTT. Binds to host KDR, and to the host integrins ITGAV/ITGB3 and ITGA5/ITGB1. Interacts with host KPNB1/importin beta-1 without previous binding to KPNA1/importin alpha-1. Interacts with EIF2AK2. Interacts with host nucleosome assembly protein NAP1L1; this interaction may be required for the transport of Tat within the nucleus, since the two proteins interact at the nuclear rim. Interacts with host C1QBP/SF2P32; this interaction involves lysine-acetylated Tat. Interacts with the host chemokine receptors CCR2, CCR3 and CXCR4. Interacts with host DPP4/CD26; this interaction may trigger an anti-proliferative effect. Interacts with host LDLR. Interacts with the host extracellular matrix metalloproteinase MMP1. Interacts with host PRMT6; this interaction mediates Tat's methylation. Interacts with, and is ubiquitinated by MDM2/Hdm2. Interacts with host PSMC3 and HTATIP2. Interacts with STAB1; this interaction may overcome SATB1-mediated repression of IL2 and IL2RA (interleukin) in T cells by binding to the same domain than HDAC1. Interacts (when acetylated) with human CDK13, thereby increasing HIV-1 mRNA splicing and promoting the production of the doubly spliced HIV-1 protein Nef. Interacts with host TBP; this interaction modulates the activity of transcriptional pre-initiation complex. Interacts with host RELA. Interacts with host PLSCR1; this interaction negatively regulates Tat transactivation activity by altering its subcellular distribution. Post-translationally, asymmetrical arginine methylation by host PRMT6 seems to diminish the transactivation capacity of Tat and affects the interaction with host CCNT1. In terms of processing, acetylation by EP300, CREBBP, GCN5L2/GCN5 and PCAF regulates the transactivation activity of Tat. EP300-mediated acetylation of Lys-50 promotes dissociation of Tat from the TAR RNA through the competitive binding to PCAF's bromodomain. In addition, the non-acetylated Tat's N-terminus can also interact with PCAF. PCAF-mediated acetylation of Lys-28 enhances Tat's binding to CCNT1. Lys-50 is deacetylated by SIRT1. Polyubiquitination by host MDM2 does not target Tat to degradation, but activates its transactivation function and fosters interaction with CCNT1 and TAR RNA. Post-translationally, phosphorylated by EIF2AK2 on serine and threonine residues adjacent to the basic region important for TAR RNA binding and function. Phosphorylation of Tat by EIF2AK2 is dependent on the prior activation of EIF2AK2 by dsRNA.

It is found in the host nucleus. The protein localises to the host nucleolus. It localises to the host cytoplasm. The protein resides in the secreted. Functionally, transcriptional activator that increases RNA Pol II processivity, thereby increasing the level of full-length viral transcripts. Recognizes a hairpin structure at the 5'-LTR of the nascent viral mRNAs referred to as the transactivation responsive RNA element (TAR) and recruits the cyclin T1-CDK9 complex (P-TEFb complex) that will in turn hyperphosphorylate the RNA polymerase II to allow efficient elongation. The CDK9 component of P-TEFb and other Tat-activated kinases hyperphosphorylate the C-terminus of RNA Pol II that becomes stabilized and much more processive. Other factors such as HTATSF1/Tat-SF1, SUPT5H/SPT5, and HTATIP2 are also important for Tat's function. Besides its effect on RNA Pol II processivity, Tat induces chromatin remodeling of proviral genes by recruiting the histone acetyltransferases (HATs) CREBBP, EP300 and PCAF to the chromatin. This also contributes to the increase in proviral transcription rate, especially when the provirus integrates in transcriptionally silent region of the host genome. To ensure maximal activation of the LTR, Tat mediates nuclear translocation of NF-kappa-B by interacting with host RELA. Through its interaction with host TBP, Tat may also modulate transcription initiation. Tat can reactivate a latently infected cell by penetrating in it and transactivating its LTR promoter. In the cytoplasm, Tat is thought to act as a translational activator of HIV-1 mRNAs. Its function is as follows. Extracellular circulating Tat can be endocytosed by surrounding uninfected cells via the binding to several surface receptors such as CD26, CXCR4, heparan sulfate proteoglycans (HSPG) or LDLR. Neurons are rarely infected, but they internalize Tat via their LDLR. Through its interaction with nuclear HATs, Tat is potentially able to control the acetylation-dependent cellular gene expression. Modulates the expression of many cellular genes involved in cell survival, proliferation or in coding for cytokines or cytokine receptors. Tat plays a role in T-cell and neurons apoptosis. Tat induced neurotoxicity and apoptosis probably contribute to neuroAIDS. Circulating Tat also acts as a chemokine-like and/or growth factor-like molecule that binds to specific receptors on the surface of the cells, affecting many cellular pathways. In the vascular system, Tat binds to ITGAV/ITGB3 and ITGA5/ITGB1 integrins dimers at the surface of endothelial cells and competes with bFGF for heparin-binding sites, leading to an excess of soluble bFGF. In Human immunodeficiency virus type 1 group M subtype B (isolate PCV12) (HIV-1), this protein is Protein Tat.